A 746-amino-acid chain; its full sequence is Transcription factor pbcR (746 aa).

The span at 1–12 (MYPWSSTGTSPF) shows a compositional bias: polar residues. The tract at residues 1 to 40 (MYPWSSTGTSPFSHPDNEGAESGDMSMGEEQQQPHQRRQK) is disordered. Residues 47–76 (CQSCRASKVRCDQPNPGMPCLRCQKSGKPC) constitute a DNA-binding region (zn(2)-C6 fungal-type). Residues 109-131 (ELQDSAGDGETAHSTALRSPSQL) form a disordered region. The span at 120 to 131 (AHSTALRSPSQL) shows a compositional bias: polar residues.

The protein resides in the nucleus. In terms of biological role, transcription factor; part of the gene cluster that mediates the biosynthesis of the diterpene ent-pimara-8(14),15-diene (PD). Acts as a positive regulator for the cluster gene. Down-regulates the expression of the penicillin gene cluster, two putative polyketide clusters, and one putative nonribosomal peptide cluster. This is Transcription factor pbcR from Emericella nidulans (strain FGSC A4 / ATCC 38163 / CBS 112.46 / NRRL 194 / M139) (Aspergillus nidulans).